Reading from the N-terminus, the 491-residue chain is Xaa-Pro aminopeptidase 1 (491 aa).

The disordered stretch occupies residues 1–32; the sequence is MAEELTPENPAIPETPEETEEPIKQRKNGLYP. The Mn(2+) site is built by Asp-308, Asp-320, His-403, Glu-434, and Glu-458.

It belongs to the peptidase M24B family. Homodimer. Requires Mn(2+) as cofactor.

The catalysed reaction is Release of any N-terminal amino acid, including proline, that is linked to proline, even from a dipeptide or tripeptide.. This chain is Xaa-Pro aminopeptidase 1 (pepPI), found in Streptomyces coelicolor (strain ATCC BAA-471 / A3(2) / M145).